Here is a 227-residue protein sequence, read N- to C-terminus: Large ribosomal subunit protein uL3 (227 aa).

Q154 carries the N5-methylglutamine modification.

This sequence belongs to the universal ribosomal protein uL3 family. In terms of assembly, part of the 50S ribosomal subunit. Forms a cluster with proteins L14 and L19. In terms of processing, methylated by PrmB.

One of the primary rRNA binding proteins, it binds directly near the 3'-end of the 23S rRNA, where it nucleates assembly of the 50S subunit. The protein is Large ribosomal subunit protein uL3 of Acidiphilium cryptum (strain JF-5).